The sequence spans 116 residues: Non-specific lipid-transfer protein 5 (116 aa).

Residues 1 to 24 form the signal peptide; sequence MARSMKLACVVLVMCMIVAPMAEG. Disulfide bonds link cysteine 28–cysteine 75, cysteine 38–cysteine 52, cysteine 53–cysteine 98, and cysteine 73–cysteine 112.

The protein belongs to the plant LTP family.

Functionally, plant non-specific lipid-transfer proteins transfer phospholipids as well as galactolipids across membranes. May play a role in wax or cutin deposition in the cell walls of expanding epidermal cells and certain secretory tissues. The protein is Non-specific lipid-transfer protein 5 of Lens culinaris (Lentil).